Consider the following 235-residue polypeptide: Small ribosomal subunit protein uS3 (235 aa).

The region spanning 39–107 is the KH type-2 domain; that stretch reads IRQYVFKALP…DVSLNIVEIR (69 aa).

This sequence belongs to the universal ribosomal protein uS3 family. As to quaternary structure, part of the 30S ribosomal subunit. Forms a tight complex with proteins S10 and S14.

Its function is as follows. Binds the lower part of the 30S subunit head. Binds mRNA in the 70S ribosome, positioning it for translation. In Sphingopyxis alaskensis (strain DSM 13593 / LMG 18877 / RB2256) (Sphingomonas alaskensis), this protein is Small ribosomal subunit protein uS3.